A 383-amino-acid chain; its full sequence is Sterol 24-C-methyltransferase ERG6 (383 aa).

Position 2 is an N-acetylserine (S2). Residue S99 is modified to Phosphoserine.

Belongs to the class I-like SAM-binding methyltransferase superfamily. Erg6/SMT family. Interacts with ERG28.

The protein resides in the microsome. Its subcellular location is the mitochondrion. It catalyses the reaction zymosterol + S-adenosyl-L-methionine = fecosterol + S-adenosyl-L-homocysteine + H(+). The protein operates within steroid metabolism; ergosterol biosynthesis; ergosterol from zymosterol: step 1/5. In terms of biological role, sterol 24-C-methyltransferase; part of the third module of ergosterol biosynthesis pathway that includes the late steps of the pathway. ERG6 catalyzes the methyl transfer from S-adenosyl-methionine to the C-24 of zymosterol to form fecosterol. The third module or late pathway involves the ergosterol synthesis itself through consecutive reactions that mainly occur in the endoplasmic reticulum (ER) membrane. Firstly, the squalene synthase ERG9 catalyzes the condensation of 2 farnesyl pyrophosphate moieties to form squalene, which is the precursor of all steroids. Squalene synthase is crucial for balancing the incorporation of farnesyl diphosphate (FPP) into sterol and nonsterol isoprene synthesis. Secondly, the squalene epoxidase ERG1 catalyzes the stereospecific oxidation of squalene to (S)-2,3-epoxysqualene, which is considered to be a rate-limiting enzyme in steroid biosynthesis. Then, the lanosterol synthase ERG7 catalyzes the cyclization of (S)-2,3 oxidosqualene to lanosterol, a reaction that forms the sterol core. In the next steps, lanosterol is transformed to zymosterol through a complex process involving various demethylation, reduction and desaturation reactions. The lanosterol 14-alpha-demethylase ERG11 (also known as CYP51) catalyzes C14-demethylation of lanosterol to produce 4,4'-dimethyl cholesta-8,14,24-triene-3-beta-ol, which is critical for ergosterol biosynthesis. The C-14 reductase ERG24 reduces the C14=C15 double bond of 4,4-dimethyl-cholesta-8,14,24-trienol to produce 4,4-dimethyl-cholesta-8,24-dienol. 4,4-dimethyl-cholesta-8,24-dienol is substrate of the C-4 demethylation complex ERG25-ERG26-ERG27 in which ERG25 catalyzes the three-step monooxygenation required for the demethylation of 4,4-dimethyl and 4alpha-methylsterols, ERG26 catalyzes the oxidative decarboxylation that results in a reduction of the 3-beta-hydroxy group at the C-3 carbon to an oxo group, and ERG27 is responsible for the reduction of the keto group on the C-3. ERG28 has a role as a scaffold to help anchor ERG25, ERG26 and ERG27 to the endoplasmic reticulum and ERG29 regulates the activity of the iron-containing C4-methylsterol oxidase ERG25. Then, the sterol 24-C-methyltransferase ERG6 catalyzes the methyl transfer from S-adenosyl-methionine to the C-24 of zymosterol to form fecosterol. The C-8 sterol isomerase ERG2 catalyzes the reaction which results in unsaturation at C-7 in the B ring of sterols and thus converts fecosterol to episterol. The sterol-C5-desaturase ERG3 then catalyzes the introduction of a C-5 double bond in the B ring to produce 5-dehydroepisterol. The C-22 sterol desaturase ERG5 further converts 5-dehydroepisterol into ergosta-5,7,22,24(28)-tetraen-3beta-ol by forming the C-22(23) double bond in the sterol side chain. Finally, ergosta-5,7,22,24(28)-tetraen-3beta-ol is substrate of the C-24(28) sterol reductase ERG4 to produce ergosterol. The sequence is that of Sterol 24-C-methyltransferase ERG6 from Saccharomyces cerevisiae (strain ATCC 204508 / S288c) (Baker's yeast).